The chain runs to 165 residues: uncharacterized protein (165 aa).

Polar residues predominate over residues 22 to 34 (QQANQENMSSRTD). A disordered region spans residues 22-45 (QQANQENMSSRTDSPIPPFGESEQ).

This is an uncharacterized protein from Homo sapiens (Human).